A 181-amino-acid chain; its full sequence is MSFSDQNLIWIDLEMTGLDPDVHKIIEIASIVTDSELNILAEGPVLAIHQSEEELAKMDEWCTNTHTGSGLVERVRGSQITEQEAVEQTIAFLEKWVPKGVSPICGNSIGQDRRFLYRHMPELEGYFHYRYIDVSTLKELTRRWNPEVLKGFSKQGTHLALDDIRESIAELKFYRQTIFKI.

The 164-residue stretch at 8–171 (LIWIDLEMTG…DDIRESIAEL (164 aa)) folds into the Exonuclease domain. Tyr-129 is an active-site residue.

It belongs to the oligoribonuclease family.

It localises to the cytoplasm. In terms of biological role, 3'-to-5' exoribonuclease specific for small oligoribonucleotides. The sequence is that of Oligoribonuclease from Vibrio vulnificus (strain CMCP6).